Consider the following 949-residue polypeptide: Isoleucine--tRNA ligase (949 aa).

The 'HIGH' region signature appears at 58–68 (PYANGDIHIGH). An L-isoleucyl-5'-AMP-binding site is contributed by Glu-567. The short motif at 608 to 612 (KMSKS) is the 'KMSKS' region element. Lys-611 lines the ATP pocket. Residues Cys-912, Cys-915, Cys-932, and Cys-935 each contribute to the Zn(2+) site.

This sequence belongs to the class-I aminoacyl-tRNA synthetase family. IleS type 1 subfamily. As to quaternary structure, monomer. Zn(2+) serves as cofactor.

It localises to the cytoplasm. It carries out the reaction tRNA(Ile) + L-isoleucine + ATP = L-isoleucyl-tRNA(Ile) + AMP + diphosphate. In terms of biological role, catalyzes the attachment of isoleucine to tRNA(Ile). As IleRS can inadvertently accommodate and process structurally similar amino acids such as valine, to avoid such errors it has two additional distinct tRNA(Ile)-dependent editing activities. One activity is designated as 'pretransfer' editing and involves the hydrolysis of activated Val-AMP. The other activity is designated 'posttransfer' editing and involves deacylation of mischarged Val-tRNA(Ile). The sequence is that of Isoleucine--tRNA ligase from Vibrio cholerae serotype O1 (strain ATCC 39315 / El Tor Inaba N16961).